The chain runs to 338 residues: Lipoate-protein ligase A (338 aa).

Residues 29–216 form the BPL/LPL catalytic domain; sequence PATQRVLFLW…AFFAHYGERV (188 aa). Residues arginine 71, 76–79, and lysine 134 contribute to the ATP site; that span reads GAVF. Residue lysine 134 participates in (R)-lipoate binding.

Belongs to the LplA family. In terms of assembly, monomer.

The protein localises to the cytoplasm. It catalyses the reaction L-lysyl-[lipoyl-carrier protein] + (R)-lipoate + ATP = N(6)-[(R)-lipoyl]-L-lysyl-[lipoyl-carrier protein] + AMP + diphosphate + H(+). It functions in the pathway protein modification; protein lipoylation via exogenous pathway; protein N(6)-(lipoyl)lysine from lipoate: step 1/2. The protein operates within protein modification; protein lipoylation via exogenous pathway; protein N(6)-(lipoyl)lysine from lipoate: step 2/2. In terms of biological role, catalyzes both the ATP-dependent activation of exogenously supplied lipoate to lipoyl-AMP and the transfer of the activated lipoyl onto the lipoyl domains of lipoate-dependent enzymes. This Salmonella typhimurium (strain LT2 / SGSC1412 / ATCC 700720) protein is Lipoate-protein ligase A.